A 72-amino-acid chain; its full sequence is MSKEDMIEFSGTVTELLPNAMFRVKLDNEHMILAHTSGKMRKNRIRVLAGDRVNVEMTPYDLSKGRITFRFK.

Positions 1 to 72 constitute an S1-like domain; it reads MSKEDMIEFS…SKGRITFRFK (72 aa).

It belongs to the IF-1 family. In terms of assembly, component of the 30S ribosomal translation pre-initiation complex which assembles on the 30S ribosome in the order IF-2 and IF-3, IF-1 and N-formylmethionyl-tRNA(fMet); mRNA recruitment can occur at any time during PIC assembly.

The protein localises to the cytoplasm. In terms of biological role, one of the essential components for the initiation of protein synthesis. Stabilizes the binding of IF-2 and IF-3 on the 30S subunit to which N-formylmethionyl-tRNA(fMet) subsequently binds. Helps modulate mRNA selection, yielding the 30S pre-initiation complex (PIC). Upon addition of the 50S ribosomal subunit IF-1, IF-2 and IF-3 are released leaving the mature 70S translation initiation complex. This chain is Translation initiation factor IF-1, found in Gluconacetobacter diazotrophicus (strain ATCC 49037 / DSM 5601 / CCUG 37298 / CIP 103539 / LMG 7603 / PAl5).